The primary structure comprises 379 residues: UDP-N-acetylglucosamine--N-acetylmuramyl-(pentapeptide) pyrophosphoryl-undecaprenol N-acetylglucosamine transferase (379 aa).

Residues Thr-17–Gly-19, Asn-128, Arg-169, Ser-197, and Gln-298 contribute to the UDP-N-acetyl-alpha-D-glucosamine site.

The protein belongs to the glycosyltransferase 28 family. MurG subfamily.

The protein resides in the cell inner membrane. It carries out the reaction di-trans,octa-cis-undecaprenyl diphospho-N-acetyl-alpha-D-muramoyl-L-alanyl-D-glutamyl-meso-2,6-diaminopimeloyl-D-alanyl-D-alanine + UDP-N-acetyl-alpha-D-glucosamine = di-trans,octa-cis-undecaprenyl diphospho-[N-acetyl-alpha-D-glucosaminyl-(1-&gt;4)]-N-acetyl-alpha-D-muramoyl-L-alanyl-D-glutamyl-meso-2,6-diaminopimeloyl-D-alanyl-D-alanine + UDP + H(+). It functions in the pathway cell wall biogenesis; peptidoglycan biosynthesis. In terms of biological role, cell wall formation. Catalyzes the transfer of a GlcNAc subunit on undecaprenyl-pyrophosphoryl-MurNAc-pentapeptide (lipid intermediate I) to form undecaprenyl-pyrophosphoryl-MurNAc-(pentapeptide)GlcNAc (lipid intermediate II). This Brucella melitensis biotype 2 (strain ATCC 23457) protein is UDP-N-acetylglucosamine--N-acetylmuramyl-(pentapeptide) pyrophosphoryl-undecaprenol N-acetylglucosamine transferase.